The chain runs to 200 residues: uncharacterized protein (200 aa).

This is an uncharacterized protein from Methanocaldococcus jannaschii (strain ATCC 43067 / DSM 2661 / JAL-1 / JCM 10045 / NBRC 100440) (Methanococcus jannaschii).